Here is a 254-residue protein sequence, read N- to C-terminus: Phosphoribosylaminoimidazole-succinocarboxamide synthase 1 (254 aa).

It belongs to the SAICAR synthetase family.

It catalyses the reaction 5-amino-1-(5-phospho-D-ribosyl)imidazole-4-carboxylate + L-aspartate + ATP = (2S)-2-[5-amino-1-(5-phospho-beta-D-ribosyl)imidazole-4-carboxamido]succinate + ADP + phosphate + 2 H(+). The protein operates within purine metabolism; IMP biosynthesis via de novo pathway; 5-amino-1-(5-phospho-D-ribosyl)imidazole-4-carboxamide from 5-amino-1-(5-phospho-D-ribosyl)imidazole-4-carboxylate: step 1/2. This chain is Phosphoribosylaminoimidazole-succinocarboxamide synthase 1 (purC1), found in Agrobacterium fabrum (strain C58 / ATCC 33970) (Agrobacterium tumefaciens (strain C58)).